The chain runs to 207 residues: Protein lin-7 homolog B (207 aa).

The Kinase interacting site signature appears at 1 to 13 (MAALVEPLGLERD). Residues 10-65 (LERDVSRAVELLERLQRSGELPPQKLQALQRVLQSRFCSAIREVYEQLYDTLDITG) enclose the L27 domain. Residues 93–175 (VVELPKTDEG…SVKLVVRYTP (83 aa)) enclose the PDZ domain. Positions 187-207 (KMRSARRRQQHQSYSSLESRG) are disordered. The span at 197–207 (HQSYSSLESRG) shows a compositional bias: polar residues.

Belongs to the lin-7 family. Forms a complex with CASK and CASKIN1. Component of the brain-specific heterotrimeric complex (LIN-10-LIN-2-LIN-7 complex) composed of at least APBA1, CASK, and LIN7, which associates with the motor protein KIF17 to transport vesicles along microtubules. Forms a heterotrimeric complex composed of MMP5, LIN7B and PATJ; the N-terminal L27 domain of PALS1 interacts with the L27 domain of PATJ and the C-terminal L27 domain of PALS1 interacts with the L27 domain of LIN7B. Forms a heterotrimeric complex with DLG1 and CASK via their L27 domains. Interacts with DLG4 and GRIN2B as well as CDH1 and CTNNB1, the channels KCNJ12/Kir2.2, KCNJ4/Kir2.3 and probably KCNJ2/Kir2.1 and SLC6A12/BGT-1 via its PDZ domain. The association of LIN7A with cadherin and beta-catenin is calcium-dependent, occurs at synaptic junctions and requires the actin cytoskeleton. Interacts with EGFR, ERBB2, ERBB3 and ERBB4 with both PDZ and KID domains. Associates with KIF17 via APBA1. Interacts with ASIC3. Interacts with TOPK. Interacts with RTKN. Interacts with APBA1. Interacts with MPP7. Interacts with DLG2. Interacts with DLG3.

It is found in the cell membrane. It localises to the basolateral cell membrane. The protein localises to the cell junction. The protein resides in the postsynaptic density membrane. Its subcellular location is the tight junction. In terms of biological role, plays a role in establishing and maintaining the asymmetric distribution of channels and receptors at the plasma membrane of polarized cells. Forms membrane-associated multiprotein complexes that may regulate delivery and recycling of proteins to the correct membrane domains. The tripartite complex composed of LIN7 (LIN7A, LIN7B or LIN7C), CASK and APBA1 associates with the motor protein KIF17 to transport vesicles containing N-methyl-D-aspartate (NMDA) receptor subunit NR2B along microtubules. This complex may have the potential to couple synaptic vesicle exocytosis to cell adhesion in brain. Ensures the proper localization of GRIN2B (subunit 2B of the NMDA receptor) to neuronal postsynaptic density and may function in localizing synaptic vesicles at synapses where it is recruited by beta-catenin and cadherin. Required to localize Kir2 channels, GABA transporter (SLC6A12) and EGFR/ERBB1, ERBB2, ERBB3 and ERBB4 to the basolateral membrane of epithelial cells. May increase the amplitude of ASIC3 acid-evoked currents by stabilizing the channel at the cell surface. The chain is Protein lin-7 homolog B (LIN7B) from Homo sapiens (Human).